Consider the following 151-residue polypeptide: Large ribosomal subunit protein bL17 (151 aa).

The segment at 118–151 is disordered; it reads EAKQPPRKEKAKKPAPVQAEEASATPASEEKAQD. A compositionally biased stretch (low complexity) spans 131–144; the sequence is PAPVQAEEASATPA.

The protein belongs to the bacterial ribosomal protein bL17 family. Part of the 50S ribosomal subunit. Contacts protein L32.

The sequence is that of Large ribosomal subunit protein bL17 from Syntrophobacter fumaroxidans (strain DSM 10017 / MPOB).